The primary structure comprises 440 residues: Chromosome partition protein MukF (440 aa).

Positions 208–236 (LSETSGTLRELQDTLDAAGDKLQANLLRI) are leucine-zipper.

The protein belongs to the MukF family. As to quaternary structure, interacts, and probably forms a ternary complex, with MukE and MukB via its C-terminal region. The complex formation is stimulated by calcium or magnesium. It is required for an interaction between MukE and MukB.

It localises to the cytoplasm. The protein resides in the nucleoid. In terms of biological role, involved in chromosome condensation, segregation and cell cycle progression. May participate in facilitating chromosome segregation by condensation DNA from both sides of a centrally located replisome during cell division. Not required for mini-F plasmid partitioning. Probably acts via its interaction with MukB and MukE. Overexpression results in anucleate cells. It has a calcium binding activity. The protein is Chromosome partition protein MukF of Klebsiella pneumoniae (strain 342).